A 328-amino-acid chain; its full sequence is Renalase (328 aa).

FAD-binding positions include Ala-13, 32-33 (DK), Arg-40, and 56-57 (QY). Residues 57-61 (YFTAR) and 96-98 (SPD) each bind substrate. Ile-128 lines the FAD pocket. Thr-185 is a binding site for substrate. Asp-302 lines the FAD pocket. Arg-308 contacts substrate. Val-309 is a binding site for FAD.

The protein belongs to the bacterial renalase family. The cofactor is FAD.

The enzyme catalyses 1,2-dihydro-beta-NAD + O2 + H(+) = H2O2 + NAD(+). It carries out the reaction 1,2-dihydro-beta-NADP + O2 + H(+) = H2O2 + NADP(+). It catalyses the reaction 1,6-dihydro-beta-NADP + O2 + H(+) = H2O2 + NADP(+). The catalysed reaction is 1,6-dihydro-beta-NAD + O2 + H(+) = H2O2 + NAD(+). In terms of biological role, catalyzes the oxidation of the 1,2-dihydro- and 1,6-dihydro- isomeric forms of beta-NAD(P) back to beta-NAD(P)+. Has a preference for 1,2-dihydro-beta-NAD as substrate. May serve to protect primary metabolism dehydrogenases from inhibition by the 1,2-dihydro- and 1,6-dihydro-beta-NAD(P) isomers. The polypeptide is Renalase (Pseudomonas savastanoi pv. phaseolicola (strain 1448A / Race 6) (Pseudomonas syringae pv. phaseolicola (strain 1448A / Race 6))).